Reading from the N-terminus, the 1544-residue chain is Arf-GAP with Rho-GAP domain, ANK repeat and PH domain-containing protein 3 (1544 aa).

An SAM domain is found at 4–68; that stretch reads PQDLDIAVWL…LRLLQTGTEE (65 aa). Disordered regions lie at residues 64–147 and 167–194; these read TGTE…EQSS and GRAQ…PTTG. Composition is skewed to pro residues over residues 82–97 and 130–139; these read SPSP…PVPK and EPSPRPPPLP. PH domains follow at residues 287 to 379 and 394 to 483; these read TPLL…SCLK and RPLR…EAVT. Residues 480-611 form the Arf-GAP domain; that stretch reads EAVTETLSDY…LFRKPHPQYP (132 aa). A C4-type zinc finger spans residues 504-527; the sequence is CADCGSSRPDWAAVNLGVVICKQC. The Rho-GAP domain maps to 907–1088; sequence TGLQEQQMSR…ELIDGYISVF (182 aa). The Ras-associating domain maps to 1117–1210; that stretch reads GDLIMEVYIE…ASLLLKKVPL (94 aa). The region spanning 1223 to 1325 is the PH 3 domain; it reads ESPRVGLLRC…WTTSILKAQH (103 aa). Position 1348 is a phosphothreonine (Thr-1348). 2 positions are modified to phosphotyrosine: Tyr-1403 and Tyr-1408. A disordered region spans residues 1422–1544; the sequence is STSFSTTREW…SSPPSSQPLT (123 aa). Residues 1438–1457 show a composition bias toward polar residues; it reads PLTSQKSLDQPFLSKSSTLG. Phosphoserine is present on residues Ser-1444 and Ser-1480. Composition is skewed to low complexity over residues 1482–1492 and 1502–1527; these read EEQLLQELSSL and GLGS…TPGF.

As to quaternary structure, interacts (via SAM domain) with INPPL1/SHIP2. In terms of processing, tyrosine phosphorylated at a low basal level. PDGF treatment stimulates phosphorylation. Tyrosine phosphorylation is increased in cells that are in the process of becoming attached to a substrate and that start spreading and flattening.

The protein localises to the cytoplasm. It localises to the cytoskeleton. Its subcellular location is the cell membrane. The protein resides in the cell projection. It is found in the lamellipodium. The protein localises to the ruffle. Its function is as follows. Phosphatidylinositol 3,4,5-trisphosphate-dependent GTPase-activating protein that modulates actin cytoskeleton remodeling by regulating ARF and RHO family members. Is activated by phosphatidylinositol 3,4,5-trisphosphate (PtdIns(3,4,5)P3) binding. Can be activated by phosphatidylinositol 3,4-bisphosphate (PtdIns(3,4,5)P2) binding, albeit with lower efficiency. Acts on ARF6, RAC1, RHOA and CDC42. Plays a role in the internalization of anthrax toxin. The polypeptide is Arf-GAP with Rho-GAP domain, ANK repeat and PH domain-containing protein 3 (ARAP3) (Homo sapiens (Human)).